The chain runs to 333 residues: NADH-quinone oxidoreductase subunit H (333 aa).

8 helical membrane passes run 17-37 (IFFA…TYGI), 88-108 (FILA…ALPF), 117-137 (IGVG…GVVT), 159-179 (ISYE…SGSL), 191-211 (VWFI…AVAE), 241-261 (FFML…TVLF), 273-293 (FIPG…LFIW), and 313-333 (VLLP…QLFF).

It belongs to the complex I subunit 1 family. As to quaternary structure, NDH-1 is composed of 14 different subunits. Subunits NuoA, H, J, K, L, M, N constitute the membrane sector of the complex.

It localises to the cell membrane. It catalyses the reaction a quinone + NADH + 5 H(+)(in) = a quinol + NAD(+) + 4 H(+)(out). Functionally, NDH-1 shuttles electrons from NADH, via FMN and iron-sulfur (Fe-S) centers, to quinones in the respiratory chain. The immediate electron acceptor for the enzyme in this species is believed to be ubiquinone. Couples the redox reaction to proton translocation (for every two electrons transferred, four hydrogen ions are translocated across the cytoplasmic membrane), and thus conserves the redox energy in a proton gradient. This subunit may bind ubiquinone. The protein is NADH-quinone oxidoreductase subunit H of Anoxybacillus flavithermus (strain DSM 21510 / WK1).